Here is a 181-residue protein sequence, read N- to C-terminus: Oligoribonuclease (181 aa).

The region spanning 8–171 is the Exonuclease domain; the sequence is LIWIDLEMTG…DDIRESIAEL (164 aa). The active site involves tyrosine 129.

Belongs to the oligoribonuclease family.

It is found in the cytoplasm. Its function is as follows. 3'-to-5' exoribonuclease specific for small oligoribonucleotides. This is Oligoribonuclease from Vibrio cholerae serotype O1 (strain ATCC 39541 / Classical Ogawa 395 / O395).